Reading from the N-terminus, the 322-residue chain is AA9 family lytic polysaccharide monooxygenase A (322 aa).

A signal peptide spans 1–15 (MKVLSLLAAASAASA). Residues histidine 16 and histidine 96 each contribute to the Cu(2+) site. 2 disulfides stabilise this stretch: cysteine 54–cysteine 182 and cysteine 152–cysteine 237. Histidine 168 and glutamine 177 together coordinate O2. O-linked (Man...) threonine glycosylation is found at threonine 228 and threonine 236. The 37-residue stretch at 286 to 322 (CTAAQWAQCGGMGFSGCTTCASPYTCKKMNDYYSQCS) folds into the CBM1 domain.

This sequence belongs to the polysaccharide monooxygenase AA9 family. Cu(2+) serves as cofactor.

Its subcellular location is the secreted. It catalyses the reaction [(1-&gt;4)-beta-D-glucosyl]n+m + reduced acceptor + O2 = 4-dehydro-beta-D-glucosyl-[(1-&gt;4)-beta-D-glucosyl]n-1 + [(1-&gt;4)-beta-D-glucosyl]m + acceptor + H2O.. Lytic polysaccharide monooxygenase (LPMO) that depolymerizes crystalline and amorphous polysaccharides via the oxidation of scissile alpha- or beta-(1-4)-glycosidic bonds, yielding C4 oxidation products. Catalysis by LPMOs requires the reduction of the active-site copper from Cu(II) to Cu(I) by a reducing agent and H(2)O(2) or O(2) as a cosubstrate. Active on tamarind xyloglucan and konjac glucomannan. This chain is AA9 family lytic polysaccharide monooxygenase A (gh61-1), found in Neurospora crassa (strain ATCC 24698 / 74-OR23-1A / CBS 708.71 / DSM 1257 / FGSC 987).